Reading from the N-terminus, the 118-residue chain is UPF0102 protein Bcav_2532 (118 aa).

Belongs to the UPF0102 family.

The chain is UPF0102 protein Bcav_2532 from Beutenbergia cavernae (strain ATCC BAA-8 / DSM 12333 / CCUG 43141 / JCM 11478 / NBRC 16432 / NCIMB 13614 / HKI 0122).